Reading from the N-terminus, the 252-residue chain is Probable transcriptional regulatory protein Ava_1228 (252 aa).

Belongs to the TACO1 family.

It localises to the cytoplasm. The polypeptide is Probable transcriptional regulatory protein Ava_1228 (Trichormus variabilis (strain ATCC 29413 / PCC 7937) (Anabaena variabilis)).